A 445-amino-acid chain; its full sequence is Fasciclin-like arabinogalactan protein 16 (445 aa).

The N-terminal stretch at 1–23 (MDSSYGATKFLLLLFLTTSIATA) is a signal peptide. 2 consecutive FAS1 domains span residues 35–173 (NSNS…ERLL) and 257–400 (VKDF…DGVL). N-linked (GlcNAc...) asparagine glycosylation is found at Asn-72 and Asn-279.

This sequence belongs to the fasciclin-like AGP family.

It localises to the secreted. In terms of biological role, may be a cell surface adhesion protein. This is Fasciclin-like arabinogalactan protein 16 (FLA16) from Arabidopsis thaliana (Mouse-ear cress).